The sequence spans 190 residues: Thioredoxin F-type, chloroplastic (190 aa).

Residues 1 to 31 form a disordered region; sequence MALHLSLSHQSWTSPAHPITSSDPTRSSVPG. The transit peptide at 1-77 directs the protein to the chloroplast; the sequence is MALHLSLSHQ…SMEQALGTQE (77 aa). Polar residues predominate over residues 7–30; the sequence is LSHQSWTSPAHPITSSDPTRSSVP. Positions 78-189 constitute a Thioredoxin domain; sequence MEAIVGKVTE…LLEAIQAARS (112 aa). Catalysis depends on nucleophile residues C114 and C117. A disulfide bridge connects residues C114 and C117.

The protein belongs to the thioredoxin family. Plant F-type subfamily. As to quaternary structure, forms a complex with heterodimeric ferredoxin-thioredoxin reductase (FTR) and ferredoxin.

The protein localises to the plastid. The protein resides in the chloroplast. Participates in various redox reactions through the reversible oxidation of the active center dithiol to a disulfide. The F form is known to activate a number of enzymes of the photosynthetic carbon cycle. The sequence is that of Thioredoxin F-type, chloroplastic from Spinacia oleracea (Spinach).